The chain runs to 355 residues: Protein RecA (355 aa).

65–72 (GPESSGKT) contributes to the ATP binding site.

The protein belongs to the RecA family.

The protein localises to the cytoplasm. Can catalyze the hydrolysis of ATP in the presence of single-stranded DNA, the ATP-dependent uptake of single-stranded DNA by duplex DNA, and the ATP-dependent hybridization of homologous single-stranded DNAs. It interacts with LexA causing its activation and leading to its autocatalytic cleavage. The chain is Protein RecA from Pseudomonas putida (strain ATCC 47054 / DSM 6125 / CFBP 8728 / NCIMB 11950 / KT2440).